The chain runs to 539 residues: Cytochrome P450 monooxygenase buaD (539 aa).

Residues 1-16 (MLVPVLTLLGTLTATG) form the signal peptide. Asn120 is a glycosylation site (N-linked (GlcNAc...) asparagine). Cys478 is a binding site for heme. N-linked (GlcNAc...) asparagine glycosylation occurs at Asn520.

This sequence belongs to the cytochrome P450 family. The cofactor is heme.

The protein operates within mycotoxin biosynthesis. Functionally, cytochrome P450 monooxygenase; part of the gene cluster that mediates the biosynthesis of burnettramic acids, an unusual class of bolaamphiphilic pyrrolizidinediones that display potent antibacterial, antifungal, and cytotoxic activities. The first step of the biosynthesis of burnettramic acids is the hydroxylation of proline by the proline hydroxylase buaE to generate 4-hydroxyproline. The PKS-NRPS buaA and trans-enoyl reductase buaC construct the highly reduced polyketide chain, and the condensation (C) domain of buaA then catalyzes the amide bond formation with the activated 4-hydroxyproline. This is followed by the R domain releasing the nascent polyketide-peptide directly via a Dieckmann condensation to afford a tetramic acid fused to the hydroxyproline, generating the bicyclic pyrrolidinedione moiety. The cytochrome P450 monooxygenases buaD and buaG are likely responsible for the multiple hydroxylations on the polyketide chain and its terminus, although in the heterologous context, buaD does not appear to be required. Therefore, while buaG may be a multifunctional cytochrome P450 monooxygenase, it cannot be ruled out that the two secondary alcohols on the polyketide chain could have an acetate origin. Finally, the glycosyltransferase buaB transfers beta-D-mannose to the aglycone burnettramic acid A to form burnettramic acid A. Burnettramic acid B is a minor cis-pyrrolizidine epimer of burnettramic acid A and it is likely that small amounts of it form naturally in acidic environments. This chain is Cytochrome P450 monooxygenase buaD, found in Petromyces alliaceus (Aspergillus alliaceus).